We begin with the raw amino-acid sequence, 478 residues long: Endoglucanase 18 (478 aa).

A signal peptide spans M1 to A21. N-linked (GlcNAc...) asparagine glycosylation is present at N29. The active-site Nucleophile is D76. H398 is an active-site residue. A disordered region spans residues H433–T452. N442 carries N-linked (GlcNAc...) asparagine glycosylation. Active-site residues include D449 and E458.

This sequence belongs to the glycosyl hydrolase 9 (cellulase E) family.

It localises to the secreted. The enzyme catalyses Endohydrolysis of (1-&gt;4)-beta-D-glucosidic linkages in cellulose, lichenin and cereal beta-D-glucans.. This is Endoglucanase 18 from Arabidopsis thaliana (Mouse-ear cress).